We begin with the raw amino-acid sequence, 87 residues long: Beta-toxin Cn5 (87 aa).

An N-terminal signal peptide occupies residues 1–19 (MNSLLMITACLFLIGTVWA). One can recognise an LCN-type CS-alpha/beta domain in the interval 20–85 (KEGYLVNKST…TYPLPNKSCS (66 aa)). Disulfide bonds link C31/C84, C35/C60, C44/C65, and C48/C67.

Belongs to the long (4 C-C) scorpion toxin superfamily. Sodium channel inhibitor family. Beta subfamily. In terms of tissue distribution, expressed by the venom gland.

The protein localises to the secreted. Beta toxins bind voltage-independently at site-4 of sodium channels (Nav) and shift the voltage of activation toward more negative potentials thereby affecting sodium channel activation and promoting spontaneous and repetitive firing. This toxin is lethal to crustaceans (freshwater crayfish (Cambarellus montezumae spp.)), it provokes a reversible paralysis to insects (crickets (Achaeta spp.)), but is not toxic to mice. At high concentrations, it does displace the (beta) mammal-specific toxin Cn2 from rat brain synaptosomes. This chain is Beta-toxin Cn5, found in Centruroides noxius (Mexican scorpion).